The primary structure comprises 260 residues: Phosphate import ATP-binding protein PstB (260 aa).

The 242-residue stretch at 14–255 folds into the ABC transporter domain; sequence VQVKNLAFYY…PRNKQTEDYI (242 aa). Residue 46–53 coordinates ATP; sequence GPSGCGKS.

It belongs to the ABC transporter superfamily. Phosphate importer (TC 3.A.1.7) family. The complex is composed of two ATP-binding proteins (PstB), two transmembrane proteins (PstC and PstA) and a solute-binding protein (PstS).

Its subcellular location is the cell inner membrane. The catalysed reaction is phosphate(out) + ATP + H2O = ADP + 2 phosphate(in) + H(+). In terms of biological role, part of the ABC transporter complex PstSACB involved in phosphate import. Responsible for energy coupling to the transport system. The protein is Phosphate import ATP-binding protein PstB of Syntrophotalea carbinolica (strain DSM 2380 / NBRC 103641 / GraBd1) (Pelobacter carbinolicus).